The following is a 216-amino-acid chain: Octanoyltransferase (216 aa).

Positions 24–212 (KFRKECILFL…NLCSFLEPIN (189 aa)) constitute a BPL/LPL catalytic domain. Residues 69-76 (RGGDFTAH), 140-142 (SIG), and 153-155 (GIA) contribute to the substrate site. Residue Cys-171 is the Acyl-thioester intermediate of the active site.

The protein belongs to the LipB family.

The protein localises to the cytoplasm. It catalyses the reaction octanoyl-[ACP] + L-lysyl-[protein] = N(6)-octanoyl-L-lysyl-[protein] + holo-[ACP] + H(+). The protein operates within protein modification; protein lipoylation via endogenous pathway; protein N(6)-(lipoyl)lysine from octanoyl-[acyl-carrier-protein]: step 1/2. Functionally, catalyzes the transfer of endogenously produced octanoic acid from octanoyl-acyl-carrier-protein onto the lipoyl domains of lipoate-dependent enzymes. Lipoyl-ACP can also act as a substrate although octanoyl-ACP is likely to be the physiological substrate. This Leptospira interrogans serogroup Icterohaemorrhagiae serovar Lai (strain 56601) protein is Octanoyltransferase.